Consider the following 541-residue polypeptide: Methyl-accepting chemotaxis protein PcaY (541 aa).

Residues 1 to 10 (MLANLKIRTG) lie on the Cytoplasmic side of the membrane. A helical membrane pass occupies residues 11–31 (MFWVLSLFSLTLLFSTASAWW). Topologically, residues 32-189 (AAVGSDQQIT…ESDRRLARAQ (158 aa)) are periplasmic. A ligand-binding domain region spans residues 35–187 (GSDQQITELD…MLESDRRLAR (153 aa)). The helical transmembrane segment at 190–210 (LLSLCLLGMTVVLAVLCWAFI) threads the bilayer. The Cytoplasmic portion of the chain corresponds to 211-541 (AQRVLHPLRE…MTALVGRFKV (331 aa)). Residues 212-264 (QRVLHPLREAGGHFRRIASGDLSVPVQGQGNNEIGQLFHELQRMQQSQRDTLG) form the HAMP domain. The region spanning 269 to 505 (CARQLDAAAS…EVDRNLLNIR (237 aa)) is the Methyl-accepting transducer domain. Residues 322–341 (TSQTTSESNQLAAQSRRQVS) form a disordered region.

The protein belongs to the methyl-accepting chemotaxis (MCP) protein family.

The protein localises to the cell inner membrane. Chemotactic-signal transducers respond to changes in the concentration of attractants and repellents in the environment, transduce a signal from the outside to the inside of the cell, and facilitate sensory adaptation through the variation of the level of methylation. PcaY is responsible for the detection of multiple aromatic and hydroaromatic compounds that are metabolized through the beta-ketoadipate catabolic pathway, including vanillin, vanillate, 4-hydroxybenzoate (4-HBA), benzoate and protocatechuate. It also senses several nonmetabolizable aromatic compounds. In Pseudomonas putida (strain ATCC 700007 / DSM 6899 / JCM 31910 / BCRC 17059 / LMG 24140 / F1), this protein is Methyl-accepting chemotaxis protein PcaY.